A 192-amino-acid chain; its full sequence is Signal peptidase complex catalytic subunit SEC11C (192 aa).

At 1-28 (MVRAGAVGAHLPASGLDIFGDLKKMNKR) the chain is on the cytoplasmic side. The helical; Signal-anchor for type II membrane protein transmembrane segment at 29–48 (QLYYQVLNFAMIVSSALMIW) threads the bilayer. Residues 49–192 (KGLIVLTGSE…GAYVLLKRES (144 aa)) lie on the Lumenal side of the membrane. Catalysis depends on charge relay system residues S68, H108, and D134. Positions 177–188 (ALLAVMGAYVLL) are C-terminal short (CTS) helix.

This sequence belongs to the peptidase S26B family. As to quaternary structure, component of the signal peptidase complex paralog C (SPC-C) composed of a catalytic subunit SEC11C and three accessory subunits SPCS1, SPCS2 and SPCS3. Within the complex, interacts with SPCS2 and SPCS3. The complex induces a local thinning of the ER membrane which is used to measure the length of the signal peptide (SP) h-region of protein substrates. This ensures the selectivity of the complex towards h-regions shorter than 18-20 amino acids. In terms of processing, may undergo processing at the N-terminus.

It localises to the endoplasmic reticulum membrane. It catalyses the reaction Cleavage of hydrophobic, N-terminal signal or leader sequences from secreted and periplasmic proteins.. In terms of biological role, catalytic component of the signal peptidase complex (SPC) which catalyzes the cleavage of N-terminal signal sequences from nascent proteins as they are translocated into the lumen of the endoplasmic reticulum. Specifically cleaves N-terminal signal peptides that contain a hydrophobic alpha-helix (h-region) shorter than 18-20 amino acids. In Homo sapiens (Human), this protein is Signal peptidase complex catalytic subunit SEC11C (SEC11C).